We begin with the raw amino-acid sequence, 255 residues long: Ribosomal RNA small subunit methyltransferase A (255 aa).

S-adenosyl-L-methionine-binding residues include Asn13, Leu15, Gly40, Glu61, Asp85, and Asn103.

It belongs to the class I-like SAM-binding methyltransferase superfamily. rRNA adenine N(6)-methyltransferase family. RsmA subfamily.

It is found in the cytoplasm. The enzyme catalyses adenosine(1518)/adenosine(1519) in 16S rRNA + 4 S-adenosyl-L-methionine = N(6)-dimethyladenosine(1518)/N(6)-dimethyladenosine(1519) in 16S rRNA + 4 S-adenosyl-L-homocysteine + 4 H(+). Its function is as follows. Specifically dimethylates two adjacent adenosines (A1518 and A1519) in the loop of a conserved hairpin near the 3'-end of 16S rRNA in the 30S particle. May play a critical role in biogenesis of 30S subunits. The chain is Ribosomal RNA small subunit methyltransferase A from Dechloromonas aromatica (strain RCB).